A 118-amino-acid chain; its full sequence is Large ribosomal subunit protein uL24 (118 aa).

This sequence belongs to the universal ribosomal protein uL24 family. Part of the 50S ribosomal subunit.

Functionally, one of two assembly initiator proteins, it binds directly to the 5'-end of the 23S rRNA, where it nucleates assembly of the 50S subunit. In terms of biological role, one of the proteins that surrounds the polypeptide exit tunnel on the outside of the subunit. This is Large ribosomal subunit protein uL24 from Prochlorococcus marinus (strain MIT 9301).